Consider the following 249-residue polypeptide: Coproheme decarboxylase (249 aa).

Residues R131, 145–149 (YPMNK), H172, Q185, and S223 each bind Fe-coproporphyrin III. Residue Y145 is part of the active site.

Belongs to the ChdC family. Type 1 subfamily. It depends on Fe-coproporphyrin III as a cofactor.

It carries out the reaction Fe-coproporphyrin III + 2 H2O2 + 2 H(+) = heme b + 2 CO2 + 4 H2O. The catalysed reaction is Fe-coproporphyrin III + H2O2 + H(+) = harderoheme III + CO2 + 2 H2O. It catalyses the reaction harderoheme III + H2O2 + H(+) = heme b + CO2 + 2 H2O. It participates in porphyrin-containing compound metabolism; protoheme biosynthesis. Involved in coproporphyrin-dependent heme b biosynthesis. Catalyzes the decarboxylation of Fe-coproporphyrin III (coproheme) to heme b (protoheme IX), the last step of the pathway. The reaction occurs in a stepwise manner with a three-propionate intermediate. This Thermus thermophilus (strain ATCC BAA-163 / DSM 7039 / HB27) protein is Coproheme decarboxylase.